Here is a 445-residue protein sequence, read N- to C-terminus: tRNA-2-methylthio-N(6)-dimethylallyladenosine synthase (445 aa).

An MTTase N-terminal domain is found at Lys-3 to Arg-124. Residues Cys-12, Cys-48, Cys-87, Cys-162, Cys-166, and Cys-169 each coordinate [4Fe-4S] cluster. Residues Tyr-148–Ala-380 enclose the Radical SAM core domain. The TRAM domain maps to Glu-383–Leu-445.

It belongs to the methylthiotransferase family. MiaB subfamily. As to quaternary structure, monomer. [4Fe-4S] cluster is required as a cofactor.

Its subcellular location is the cytoplasm. It catalyses the reaction N(6)-dimethylallyladenosine(37) in tRNA + (sulfur carrier)-SH + AH2 + 2 S-adenosyl-L-methionine = 2-methylsulfanyl-N(6)-dimethylallyladenosine(37) in tRNA + (sulfur carrier)-H + 5'-deoxyadenosine + L-methionine + A + S-adenosyl-L-homocysteine + 2 H(+). Catalyzes the methylthiolation of N6-(dimethylallyl)adenosine (i(6)A), leading to the formation of 2-methylthio-N6-(dimethylallyl)adenosine (ms(2)i(6)A) at position 37 in tRNAs that read codons beginning with uridine. The polypeptide is tRNA-2-methylthio-N(6)-dimethylallyladenosine synthase (Rickettsia akari (strain Hartford)).